Reading from the N-terminus, the 311-residue chain is Urease accessory protein UreD (311 aa).

Belongs to the UreD family. UreD, UreF and UreG form a complex that acts as a GTP-hydrolysis-dependent molecular chaperone, activating the urease apoprotein by helping to assemble the nickel containing metallocenter of UreC. The UreE protein probably delivers the nickel.

Its subcellular location is the cytoplasm. Required for maturation of urease via the functional incorporation of the urease nickel metallocenter. The polypeptide is Urease accessory protein UreD (Parasynechococcus marenigrum (strain WH8102)).